The primary structure comprises 118 residues: 5-hydroxyisourate hydrolase (118 aa).

3 residues coordinate substrate: His7, Arg46, and Tyr115.

The protein belongs to the transthyretin family. 5-hydroxyisourate hydrolase subfamily. Homotetramer.

The enzyme catalyses 5-hydroxyisourate + H2O = 5-hydroxy-2-oxo-4-ureido-2,5-dihydro-1H-imidazole-5-carboxylate + H(+). Functionally, catalyzes the hydrolysis of 5-hydroxyisourate (HIU) to 2-oxo-4-hydroxy-4-carboxy-5-ureidoimidazoline (OHCU). The protein is 5-hydroxyisourate hydrolase of Brucella suis biovar 1 (strain 1330).